The chain runs to 368 residues: RNA polymerase sigma factor SigA (368 aa).

Residues 16–90 form a sigma-70 factor domain-1 region; that stretch reads TLTLEDVKKQ…KLNPSDLSAP (75 aa). A disordered region spans residues 69 to 90; the sequence is LVNEKDSSDTDEKLNPSDLSAP. Positions 71 to 83 are enriched in basic and acidic residues; the sequence is NEKDSSDTDEKLN. Residues 135–205 form a sigma-70 factor domain-2 region; sequence LAEANLRLVV…TRAIADQART (71 aa). The Interaction with polymerase core subunit RpoC signature appears at 159–162; it reads DLIQ. Positions 214–291 are sigma-70 factor domain-3; that stretch reads ETINKLIRVQ…QEAQSPSDHA (78 aa). The tract at residues 303-356 is sigma-70 factor domain-4; it reads VLDTLTDREENVLRLRFGLDDGRTRTLEEVGKVFGVTRERIRQIEAKALRKLRH. The H-T-H motif DNA-binding region spans 329–348; it reads LEEVGKVFGVTRERIRQIEA.

It belongs to the sigma-70 factor family. RpoD/SigA subfamily. In terms of assembly, interacts transiently with the RNA polymerase catalytic core formed by RpoA, RpoB, RpoC and RpoZ (2 alpha, 1 beta, 1 beta' and 1 omega subunit) to form the RNA polymerase holoenzyme that can initiate transcription. Interacts (via sigma-70 factor domain 4) with the phage G1 protein gp67; this inhibits rRNA synthesis. Interaction with phage G1 protein gp67 does not inhibit transcription in general, but selectively inhibits transcription from promoters that require interaction of the RNA polymerase alpha subunit with DNA sequences upstream of the -35 promoter element.

The protein resides in the cytoplasm. In terms of biological role, sigma factors are initiation factors that promote the attachment of RNA polymerase to specific initiation sites and are then released. This sigma factor is the primary sigma factor during exponential growth. This chain is RNA polymerase sigma factor SigA, found in Staphylococcus aureus (strain NCTC 8325 / PS 47).